Here is a 160-residue protein sequence, read N- to C-terminus: MSDEKTERPVKTANQRGAARLAAVQALYQMDVGGTGVLEIVAEYEAHRLGQEIDGATYLKADAGWFRSIVSGVVRDQVRLDPLIAAALQDDWALSRLDSTVRAILRAGVFELLDRKDVPVAVIVTEYVEIAQAFFDDDEPKLVNAVLDRIAKQVRSEAKK.

It belongs to the NusB family.

Functionally, involved in transcription antitermination. Required for transcription of ribosomal RNA (rRNA) genes. Binds specifically to the boxA antiterminator sequence of the ribosomal RNA (rrn) operons. This is Transcription antitermination protein NusB from Rhizobium etli (strain CIAT 652).